The sequence spans 345 residues: Dihydroorotate dehydrogenase (quinone) (345 aa).

FMN-binding positions include 65–69 and Thr89; that span reads AGLDK. Residue Lys69 coordinates substrate. 114–118 contributes to the substrate binding site; the sequence is NRMGF. Residues Asn142 and Asn175 each coordinate FMN. Asn175 provides a ligand contact to substrate. Residue Ser178 is the Nucleophile of the active site. Asn180 is a binding site for substrate. 2 residues coordinate FMN: Lys220 and Thr248. 249–250 serves as a coordination point for substrate; sequence NT. Residues Gly271, Gly300, and 321 to 322 contribute to the FMN site; that span reads YT.

The protein belongs to the dihydroorotate dehydrogenase family. Type 2 subfamily. As to quaternary structure, monomer. Requires FMN as cofactor.

Its subcellular location is the cell membrane. The enzyme catalyses (S)-dihydroorotate + a quinone = orotate + a quinol. It participates in pyrimidine metabolism; UMP biosynthesis via de novo pathway; orotate from (S)-dihydroorotate (quinone route): step 1/1. Catalyzes the conversion of dihydroorotate to orotate with quinone as electron acceptor. The polypeptide is Dihydroorotate dehydrogenase (quinone) (Burkholderia mallei (strain NCTC 10247)).